A 717-amino-acid polypeptide reads, in one-letter code: F-box only protein 42 (717 aa).

The span at methionine 1–glutamate 30 shows a compositional bias: acidic residues. The interval methionine 1 to proline 34 is disordered. One can recognise an F-box domain in the interval asparagine 44–phenylalanine 93. Kelch repeat units follow at residues serine 132–aspartate 184, leucine 186–aspartate 242, methionine 244–aspartate 293, and threonine 295–histidine 342. Residues arginine 361–tyrosine 474 are disordered. The segment covering proline 363–serine 376 has biased composition (low complexity). 2 positions are modified to phosphoserine: serine 365 and serine 373. Threonine 378 carries the phosphothreonine modification. Polar residues-rich tracts occupy residues glutamine 416 to glycine 426 and serine 455 to serine 469. Serine 552 is subject to Phosphoserine. The segment covering glycine 570–glycine 596 has biased composition (low complexity). Positions glycine 570–valine 631 are disordered.

Component of some SCF complex, composed of CUL1, SKP1, RBX1 and FBXO42. Interacts (via the kelch domain) with p53/TP53; interaction is direct.

Its function is as follows. Substrate-recognition component of some SCF (SKP1-CUL1-F-box protein)-type E3 ubiquitin ligase complex. Specifically recognizes p53/TP53, promoting its ubiquitination and degradation. This Homo sapiens (Human) protein is F-box only protein 42 (FBXO42).